A 96-amino-acid chain; its full sequence is Ubiquitin-like protein NEDD8-like protein 1 (96 aa).

Residues 75 to 96 (SQSDNSEKSEKSGKSEKDCILM) form a disordered region. A compositionally biased stretch (basic and acidic residues) spans 79–96 (NSEKSEKSGKSEKDCILM).

This sequence belongs to the ubiquitin family.

The sequence is that of Ubiquitin-like protein NEDD8-like protein 1 (nedd8l1) from Dictyostelium discoideum (Social amoeba).